Reading from the N-terminus, the 213-residue chain is Uridine kinase (213 aa).

15-22 is an ATP binding site; sequence GASASGKS.

It belongs to the uridine kinase family.

The protein localises to the cytoplasm. The catalysed reaction is uridine + ATP = UMP + ADP + H(+). It carries out the reaction cytidine + ATP = CMP + ADP + H(+). Its pathway is pyrimidine metabolism; CTP biosynthesis via salvage pathway; CTP from cytidine: step 1/3. It participates in pyrimidine metabolism; UMP biosynthesis via salvage pathway; UMP from uridine: step 1/1. The protein is Uridine kinase of Sodalis glossinidius (strain morsitans).